Consider the following 610-residue polypeptide: MKWVVSFFLLFLLNFSDSRTMHKNAYGIDSILDSSPCSSGTNLVGLATIFFAQSVQGATYEEVSQMVKDVLTIIEKPTGSKQPAGCLENQVSAFLEEICREKEIPEKYGLSDCCSRTGEERHDCFLAHKKAAPASIPPFPVLEPVTSCKSYKENRELFINRYIYEIARRHPVLYAPTILSVANQYNKIIPHCCKAENATECFETKVTSITKELRESSLLNQHICAVMGKFGPRTFRAITVTKVSQKFPKANFTEIQKLVMDVAHIHEECCKGNVLECLQDGERVMSYICSQQDILSRQIAECCKLPTTLELGHCIIHAENDDKPEGLSPNVNRFLGDRDFNQLSSRDKDLSMARFTYEYSRRHTKLAVPIILRVAKGYQELLEKCSQSENPSECQDKGEEELEKYIQESQALAKRSCGLFQKLGEYYLQNAFLVAYTKKAPQLTSPELMALTRKMANAGAICCHLSEDKQLACGEGVADLIIGHLCIRHEENPINPGVDQCCTSSYSNRRPCFSSLVVDETYVPPPFSDDKFIFHKDLCQVQGVPLQTMKQQFLINLVKQKPQITEEQLETVVADFSGLLEKCCQSQEQEVCFTEEGPALISKTRAALGV.

Positions 1–18 (MKWVVSFFLLFLLNFSDS) are cleaved as a signal peptide. Albumin domains follow at residues 19–210 (RTMH…TSIT), 211–403 (KELR…EELE), and 404–602 (KYIQ…ALIS). H22 is a binding site for Cu(2+). Cystine bridges form between C99/C114, C113/C124, C148/C193, C192/C201, C224/C270, C269/C277, C289/C303, and C302/C314. 2 positions are modified to phosphoserine: S111 and S115. Residues N197 and N251 are each glycosylated (N-linked (GlcNAc...) asparagine). S345 is modified (phosphoserine). Disulfide bonds link C385–C394, C417–C463, C462–C473, C486–C502, C501–C512, C539–C584, and C583–C592. At S445 the chain carries Phosphoserine.

Belongs to the ALB/AFP/VDB family. In terms of assembly, dimeric and trimeric forms have been found in addition to the monomeric form. Post-translationally, sulfated. In terms of tissue distribution, plasma.

Its subcellular location is the secreted. Binds copper, nickel, and fatty acids as well as, and bilirubin less well than, serum albumin. The polypeptide is Alpha-fetoprotein (AFP) (Bos taurus (Bovine)).